The sequence spans 199 residues: NAD(P)H dehydrogenase (quinone) (199 aa).

A Flavodoxin-like domain is found at isoleucine 4 to valine 190. Residues serine 10–isoleucine 15 and threonine 79–phenylalanine 81 contribute to the FMN site. Tyrosine 12 is an NAD(+) binding site. Substrate is bound at residue tryptophan 99. Histidine 134 is a binding site for FMN.

The protein belongs to the WrbA family. Requires FMN as cofactor.

It carries out the reaction a quinone + NADH + H(+) = a quinol + NAD(+). The enzyme catalyses a quinone + NADPH + H(+) = a quinol + NADP(+). In Photorhabdus laumondii subsp. laumondii (strain DSM 15139 / CIP 105565 / TT01) (Photorhabdus luminescens subsp. laumondii), this protein is NAD(P)H dehydrogenase (quinone).